The primary structure comprises 432 residues: Adenylosuccinate synthetase (432 aa).

Residues 13–19 and 41–43 contribute to the GTP site; these read GDEGKGK and GHT. D14 acts as the Proton acceptor in catalysis. Residues D14 and G41 each contribute to the Mg(2+) site. Residues 14–17, 39–42, T130, R144, Q225, T240, and R304 contribute to the IMP site; these read DEGK and NAGH. Residue H42 is the Proton donor of the active site. 300–306 is a binding site for substrate; the sequence is ATTGRKR. GTP is bound by residues R306, 332–334, and 415–417; these read KLD and STG.

The protein belongs to the adenylosuccinate synthetase family. Homodimer. Mg(2+) is required as a cofactor.

It localises to the cytoplasm. It catalyses the reaction IMP + L-aspartate + GTP = N(6)-(1,2-dicarboxyethyl)-AMP + GDP + phosphate + 2 H(+). It participates in purine metabolism; AMP biosynthesis via de novo pathway; AMP from IMP: step 1/2. Functionally, plays an important role in the de novo pathway of purine nucleotide biosynthesis. Catalyzes the first committed step in the biosynthesis of AMP from IMP. In Tolumonas auensis (strain DSM 9187 / NBRC 110442 / TA 4), this protein is Adenylosuccinate synthetase.